We begin with the raw amino-acid sequence, 595 residues long: Isoprene synthase, chloroplastic (595 aa).

Residues Met-1–Arg-37 constitute a chloroplast transit peptide. Asp-345 is a binding site for dimethylallyl diphosphate. Mg(2+) contacts are provided by Asp-345 and Asp-349. The DDXXD motif motif lies at Asp-345–Asp-349. 3 residues coordinate dimethylallyl diphosphate: Glu-423, Arg-486, and Asn-489. 3 residues coordinate Mg(2+): Asn-489, Ser-493, and Glu-497.

The protein belongs to the terpene synthase family. Tpsb subfamily. Mg(2+) serves as cofactor. Predominantly expressed in leaves.

It localises to the plastid. Its subcellular location is the chloroplast. It carries out the reaction dimethylallyl diphosphate = isoprene + diphosphate. It functions in the pathway terpene metabolism. Functionally, lyase that catalyzes the formation of isoprene from dimethylallyl diphosphate, but not from isopentenyl diphosphate or geranyl diphosphate. The polypeptide is Isoprene synthase, chloroplastic (Populus alba (White poplar)).